Reading from the N-terminus, the 149-residue chain is Large ribosomal subunit protein bL9 (149 aa).

This sequence belongs to the bacterial ribosomal protein bL9 family.

Its function is as follows. Binds to the 23S rRNA. The polypeptide is Large ribosomal subunit protein bL9 (Stenotrophomonas maltophilia (strain K279a)).